Reading from the N-terminus, the 128-residue chain is Large ribosomal subunit protein bL19 (128 aa).

This sequence belongs to the bacterial ribosomal protein bL19 family.

Functionally, this protein is located at the 30S-50S ribosomal subunit interface and may play a role in the structure and function of the aminoacyl-tRNA binding site. The polypeptide is Large ribosomal subunit protein bL19 (Herminiimonas arsenicoxydans).